The chain runs to 363 residues: MNTVFNFSSGPAKLPIEVLQQAQQELCNWHGLGTSIMEISHRSDEFRQVAYESEQDLRSLLNIPDNYQVLFCHGGARAQFAAVPMNLLGKSKIADYIHGGYWSYSAAKEAHKYCQPRMIEVMTYINGWRGIKPMVEWVLSPDNVAYVHYCPNETIDGLTIDELPDFGNKIVVADFSSAILARPIDVSKYGVIYASAQKNIGPAGLAIVIIRDDLLINRASTKLPSILNYQLLANNKSMFNTPPTFAWYVSGLVFKWLKVQGGLVEIEKNNRAKAILLYNTIDNSEFYYNNILPVNRSYMNVPFYLANSALDDLFIIEARNAGLYALKGHRVAGGMRAALYNAMPLEGVKTLVQFMHNFACRYG.

The L-glutamate site is built by Ser-9 and Arg-42. Pyridoxal 5'-phosphate-binding positions include 76 to 77 (AR), Trp-102, Thr-154, Asp-174, and Gln-197. Lys-198 carries the N6-(pyridoxal phosphate)lysine modification. 240–241 (NT) is a binding site for pyridoxal 5'-phosphate.

The protein belongs to the class-V pyridoxal-phosphate-dependent aminotransferase family. SerC subfamily. As to quaternary structure, homodimer. It depends on pyridoxal 5'-phosphate as a cofactor.

It is found in the cytoplasm. The enzyme catalyses O-phospho-L-serine + 2-oxoglutarate = 3-phosphooxypyruvate + L-glutamate. The catalysed reaction is 4-(phosphooxy)-L-threonine + 2-oxoglutarate = (R)-3-hydroxy-2-oxo-4-phosphooxybutanoate + L-glutamate. It functions in the pathway amino-acid biosynthesis; L-serine biosynthesis; L-serine from 3-phospho-D-glycerate: step 2/3. Its pathway is cofactor biosynthesis; pyridoxine 5'-phosphate biosynthesis; pyridoxine 5'-phosphate from D-erythrose 4-phosphate: step 3/5. In terms of biological role, catalyzes the reversible conversion of 3-phosphohydroxypyruvate to phosphoserine and of 3-hydroxy-2-oxo-4-phosphonooxybutanoate to phosphohydroxythreonine. The sequence is that of Phosphoserine aminotransferase from Baumannia cicadellinicola subsp. Homalodisca coagulata.